The chain runs to 183 residues: Probable GTP-binding protein EngB (183 aa).

The EngB-type G domain maps to 17–183 (DYPEVVFVGR…KKELLSRILN (167 aa)). GTP-binding positions include 25–32 (GRSNVGKS), 51–55 (GRTRA), 69–72 (DVPG), 137–140 (TKID), and 166–168 (SSA). 2 residues coordinate Mg(2+): serine 32 and threonine 53.

Belongs to the TRAFAC class TrmE-Era-EngA-EngB-Septin-like GTPase superfamily. EngB GTPase family. Mg(2+) is required as a cofactor.

In terms of biological role, necessary for normal cell division and for the maintenance of normal septation. The polypeptide is Probable GTP-binding protein EngB (Aquifex aeolicus (strain VF5)).